We begin with the raw amino-acid sequence, 325 residues long: Elongation factor P--(R)-beta-lysine ligase (325 aa).

Substrate is bound at residue 76–78; that stretch reads SPE. Residues 100–102 and asparagine 109 each bind ATP; that span reads RNE. Tyrosine 118 is a binding site for substrate. 244-245 serves as a coordination point for ATP; sequence EL. Glutamate 251 serves as a coordination point for substrate. Residue glycine 300 coordinates ATP.

Belongs to the class-II aminoacyl-tRNA synthetase family. EpmA subfamily. In terms of assembly, homodimer.

It carries out the reaction D-beta-lysine + L-lysyl-[protein] + ATP = N(6)-((3R)-3,6-diaminohexanoyl)-L-lysyl-[protein] + AMP + diphosphate + H(+). Its function is as follows. With EpmB is involved in the beta-lysylation step of the post-translational modification of translation elongation factor P (EF-P). Catalyzes the ATP-dependent activation of (R)-beta-lysine produced by EpmB, forming a lysyl-adenylate, from which the beta-lysyl moiety is then transferred to the epsilon-amino group of a conserved specific lysine residue in EF-P. The sequence is that of Elongation factor P--(R)-beta-lysine ligase from Klebsiella pneumoniae (strain 342).